The chain runs to 338 residues: Protein SGT1 homolog (338 aa).

Alanine 2 carries the post-translational modification N-acetylalanine. TPR repeat units follow at residues 11–45, 46–79, and 80–113; these read AASRLFRSFSDALIEQDPQAALEELTKALEQKPDD, APYYCQRAYCHILLGNYSDAVADAKKSLELNPNS, and STALLRKGICEYHEKNYAAALETFTEGQKLNSAD. One can recognise a CS domain in the interval 142–231; sequence QSKIKYDWYQ…PEAVRWEKLE (90 aa). The SGS domain maps to 249–338; sequence LYPSSSHYTR…PPDDMEWKKY (90 aa). Serine 254 bears the Phosphoserine mark. At threonine 257 the chain carries Phosphothreonine. Lysine 268 is covalently cross-linked (Glycyl lysine isopeptide (Lys-Gly) (interchain with G-Cter in SUMO1); alternate). A Glycyl lysine isopeptide (Lys-Gly) (interchain with G-Cter in SUMO2); alternate cross-link involves residue lysine 268. Position 304 is a phosphoserine (serine 304).

It belongs to the SGT1 family. Probably associates with SCF (SKP1-CUL1-F-box protein) complex through interaction with SKP1. Interacts with S100A6. Interacts with HSP90. Post-translationally, phosphorylated at Ser-254 and Ser-304, dephosphorylation promotes nuclear translocation, most likely due to disruption of the SUGT1-HSP90 complex.

The protein resides in the cytoplasm. It localises to the nucleus. Its function is as follows. May play a role in ubiquitination and subsequent proteasomal degradation of target proteins. The polypeptide is Protein SGT1 homolog (Bos taurus (Bovine)).